A 417-amino-acid polypeptide reads, in one-letter code: 3-isopropylmalate dehydratase large subunit 2 (417 aa).

Cysteine 298, cysteine 358, and cysteine 361 together coordinate [4Fe-4S] cluster.

It belongs to the aconitase/IPM isomerase family. LeuC type 2 subfamily. As to quaternary structure, heterodimer of LeuC and LeuD. [4Fe-4S] cluster is required as a cofactor.

It catalyses the reaction (2R,3S)-3-isopropylmalate = (2S)-2-isopropylmalate. It participates in amino-acid biosynthesis; L-leucine biosynthesis; L-leucine from 3-methyl-2-oxobutanoate: step 2/4. Functionally, catalyzes the isomerization between 2-isopropylmalate and 3-isopropylmalate, via the formation of 2-isopropylmaleate. The polypeptide is 3-isopropylmalate dehydratase large subunit 2 (Thermotoga maritima (strain ATCC 43589 / DSM 3109 / JCM 10099 / NBRC 100826 / MSB8)).